The primary structure comprises 138 residues: Acidic phospholipase A2 BmooPLA2 (138 aa).

An N-terminal signal peptide occupies residues methionine 1–glycine 16. Intrachain disulfides connect cysteine 42–cysteine 131, cysteine 44–cysteine 60, cysteine 59–cysteine 111, cysteine 65–cysteine 138, cysteine 66–cysteine 104, cysteine 73–cysteine 97, and cysteine 91–cysteine 102. Positions 43, 45, and 47 each coordinate Ca(2+). Histidine 63 is an active-site residue. Ca(2+) is bound at residue aspartate 64. Residue aspartate 105 is part of the active site.

The protein belongs to the phospholipase A2 family. Group II subfamily. D49 sub-subfamily. It depends on Ca(2+) as a cofactor. Expressed by the venom gland.

The protein localises to the secreted. The catalysed reaction is a 1,2-diacyl-sn-glycero-3-phosphocholine + H2O = a 1-acyl-sn-glycero-3-phosphocholine + a fatty acid + H(+). In terms of biological role, snake venom phospholipase A2 (PLA2) that inhibits ADP- and collagen-induced platelet aggregation, has edema-inducing, anti-coagulant activity, antibacterial activity, and cytotoxic activity. In vivo, has a hypotensive effect. PLA2 catalyzes the calcium-dependent hydrolysis of the 2-acyl groups in 3-sn-phosphoglycerides. This Bothrops moojeni (Lance-headed viper) protein is Acidic phospholipase A2 BmooPLA2.